The sequence spans 570 residues: Proline--tRNA ligase (570 aa).

It belongs to the class-II aminoacyl-tRNA synthetase family. ProS type 1 subfamily. As to quaternary structure, homodimer.

The protein localises to the cytoplasm. It carries out the reaction tRNA(Pro) + L-proline + ATP = L-prolyl-tRNA(Pro) + AMP + diphosphate. Catalyzes the attachment of proline to tRNA(Pro) in a two-step reaction: proline is first activated by ATP to form Pro-AMP and then transferred to the acceptor end of tRNA(Pro). As ProRS can inadvertently accommodate and process non-cognate amino acids such as alanine and cysteine, to avoid such errors it has two additional distinct editing activities against alanine. One activity is designated as 'pretransfer' editing and involves the tRNA(Pro)-independent hydrolysis of activated Ala-AMP. The other activity is designated 'posttransfer' editing and involves deacylation of mischarged Ala-tRNA(Pro). The misacylated Cys-tRNA(Pro) is not edited by ProRS. In Syntrophomonas wolfei subsp. wolfei (strain DSM 2245B / Goettingen), this protein is Proline--tRNA ligase.